We begin with the raw amino-acid sequence, 206 residues long: Guanylate kinase (206 aa).

The region spanning 6–184 is the Guanylate kinase-like domain; it reads GNLFILSAPS…ALTDIETIVM (179 aa). 13–20 contacts ATP; that stretch reads APSGAGKS.

The protein belongs to the guanylate kinase family.

The protein resides in the cytoplasm. It carries out the reaction GMP + ATP = GDP + ADP. In terms of biological role, essential for recycling GMP and indirectly, cGMP. This Pseudoalteromonas translucida (strain TAC 125) protein is Guanylate kinase.